The sequence spans 410 residues: NADH-quinone oxidoreductase subunit H (410 aa).

Helical transmembrane passes span 11-31 (LVAA…LVAI), 79-99 (FVYF…FAFI), 119-139 (LPVA…GIVL), 160-180 (VISY…MAGT), 192-212 (GVWY…SMVG), 257-277 (ALAA…NMWA), 283-303 (WWPL…YFWL), 317-337 (ALGW…AAII), and 347-367 (YWTP…VLLL). The tract at residues 376-410 (ARASARQRGDEGTSPEPAFPTPPLLAGATKENAGG) is disordered.

Belongs to the complex I subunit 1 family. NDH-1 is composed of 14 different subunits. Subunits NuoA, H, J, K, L, M, N constitute the membrane sector of the complex.

It localises to the cell membrane. The catalysed reaction is a quinone + NADH + 5 H(+)(in) = a quinol + NAD(+) + 4 H(+)(out). Functionally, NDH-1 shuttles electrons from NADH, via FMN and iron-sulfur (Fe-S) centers, to quinones in the respiratory chain. The immediate electron acceptor for the enzyme in this species is believed to be menaquinone. Couples the redox reaction to proton translocation (for every two electrons transferred, four hydrogen ions are translocated across the cytoplasmic membrane), and thus conserves the redox energy in a proton gradient. The sequence is that of NADH-quinone oxidoreductase subunit H from Mycobacterium bovis (strain ATCC BAA-935 / AF2122/97).